Consider the following 588-residue polypeptide: Aspartate--tRNA ligase (588 aa).

Glu-172 contacts L-aspartate. Residues 196–199 form an aspartate region; sequence QLFK. Position 218 (Arg-218) interacts with L-aspartate. ATP-binding positions include 218-220 and Gln-227; that span reads RDE. His-449 contacts L-aspartate. Residue Glu-483 participates in ATP binding. Arg-490 is an L-aspartate binding site. 535–538 contacts ATP; sequence GLDR.

This sequence belongs to the class-II aminoacyl-tRNA synthetase family. Type 1 subfamily. In terms of assembly, homodimer.

The protein resides in the cytoplasm. The enzyme catalyses tRNA(Asp) + L-aspartate + ATP = L-aspartyl-tRNA(Asp) + AMP + diphosphate. Functionally, catalyzes the attachment of L-aspartate to tRNA(Asp) in a two-step reaction: L-aspartate is first activated by ATP to form Asp-AMP and then transferred to the acceptor end of tRNA(Asp). The chain is Aspartate--tRNA ligase from Pasteurella multocida (strain Pm70).